Consider the following 149-residue polypeptide: D-aminoacyl-tRNA deacylase (149 aa).

A Gly-cisPro motif, important for rejection of L-amino acids motif is present at residues 137–138 (GP).

This sequence belongs to the DTD family. In terms of assembly, homodimer.

It localises to the cytoplasm. The enzyme catalyses glycyl-tRNA(Ala) + H2O = tRNA(Ala) + glycine + H(+). The catalysed reaction is a D-aminoacyl-tRNA + H2O = a tRNA + a D-alpha-amino acid + H(+). An aminoacyl-tRNA editing enzyme that deacylates mischarged D-aminoacyl-tRNAs. Also deacylates mischarged glycyl-tRNA(Ala), protecting cells against glycine mischarging by AlaRS. Acts via tRNA-based rather than protein-based catalysis; rejects L-amino acids rather than detecting D-amino acids in the active site. By recycling D-aminoacyl-tRNA to D-amino acids and free tRNA molecules, this enzyme counteracts the toxicity associated with the formation of D-aminoacyl-tRNA entities in vivo and helps enforce protein L-homochirality. This chain is D-aminoacyl-tRNA deacylase, found in Syntrophotalea carbinolica (strain DSM 2380 / NBRC 103641 / GraBd1) (Pelobacter carbinolicus).